We begin with the raw amino-acid sequence, 546 residues long: Choline oxidase (546 aa).

Residues 23 to 24, Glu-44, Trp-71, 90 to 92, 96 to 103, Ala-232, and Tyr-465 each bind FAD; these read SA, AKV, and CSSHNSCI. His-99 carries the tele-8alpha-FAD histidine modification. Residue His-466 is the Proton acceptor of the active site. Residues Ala-500 and 510–512 each bind FAD; that span reads NPN.

Belongs to the GMC oxidoreductase family. Homodimer. Requires FAD as cofactor.

The enzyme catalyses choline + 2 O2 + H2O = glycine betaine + 2 H2O2 + H(+). It functions in the pathway amine and polyamine biosynthesis; betaine biosynthesis via choline pathway; betaine from choline: step 1/1. Functionally, catalyzes the two-step oxidative conversion of choline to glycine-betaine with betaine aldehyde as an intermediate. Glycine-betaine accumulates to high levels in the cytoplasm of cells to prevent dehydration and plasmolysis in adverse hyperosmotic environments. Accepts either choline or the reaction intermediate betaine-aldehyde as substrate. This is Choline oxidase (codA) from Arthrobacter globiformis.